The following is a 135-amino-acid chain: MNKFSLFFALTATLMTITESAVPTASISAHVLDISGGSPAGGVQILAYIQQNDDWTKIGSEFTQDNGRVDWVSPDFTLIPGTYRLVYITEPYYKAKNVESFYPYVEVVFNIRDATQHYHVPLTLSPWGYSTYRGS.

A signal peptide spans 1–20 (MNKFSLFFALTATLMTITES). Residues His30, Arg68, and Tyr132 each coordinate substrate.

This sequence belongs to the transthyretin family. 5-hydroxyisourate hydrolase subfamily. In terms of assembly, homotetramer.

It carries out the reaction 5-hydroxyisourate + H2O = 5-hydroxy-2-oxo-4-ureido-2,5-dihydro-1H-imidazole-5-carboxylate + H(+). Functionally, catalyzes the hydrolysis of 5-hydroxyisourate (HIU) to 2-oxo-4-hydroxy-4-carboxy-5-ureidoimidazoline (OHCU). This is Probable 5-hydroxyisourate hydrolase R09H10.3 from Caenorhabditis elegans.